The following is a 260-amino-acid chain: Ribonuclease HII (260 aa).

Residues 71-259 form the RNase H type-2 domain; sequence RRIAGIDEAG…VREVLKASEQ (189 aa). A divalent metal cation contacts are provided by aspartate 77, glutamate 78, and aspartate 169.

It belongs to the RNase HII family. Mn(2+) is required as a cofactor. Requires Mg(2+) as cofactor.

The protein localises to the cytoplasm. It carries out the reaction Endonucleolytic cleavage to 5'-phosphomonoester.. Endonuclease that specifically degrades the RNA of RNA-DNA hybrids. The polypeptide is Ribonuclease HII (Geobacillus kaustophilus (strain HTA426)).